We begin with the raw amino-acid sequence, 176 residues long: Protein GrpE (176 aa).

The protein belongs to the GrpE family. Homodimer.

The protein resides in the cytoplasm. In terms of biological role, participates actively in the response to hyperosmotic and heat shock by preventing the aggregation of stress-denatured proteins, in association with DnaK and GrpE. It is the nucleotide exchange factor for DnaK and may function as a thermosensor. Unfolded proteins bind initially to DnaJ; upon interaction with the DnaJ-bound protein, DnaK hydrolyzes its bound ATP, resulting in the formation of a stable complex. GrpE releases ADP from DnaK; ATP binding to DnaK triggers the release of the substrate protein, thus completing the reaction cycle. Several rounds of ATP-dependent interactions between DnaJ, DnaK and GrpE are required for fully efficient folding. The chain is Protein GrpE from Thermoplasma volcanium (strain ATCC 51530 / DSM 4299 / JCM 9571 / NBRC 15438 / GSS1).